A 68-amino-acid polypeptide reads, in one-letter code: Large ribosomal subunit protein bL32 (68 aa).

A disordered region spans residues 1–20; sequence MAVPQNRVTRSRRNMRRSHD.

This sequence belongs to the bacterial ribosomal protein bL32 family.

The sequence is that of Large ribosomal subunit protein bL32 from Cereibacter sphaeroides (strain ATCC 17029 / ATH 2.4.9) (Rhodobacter sphaeroides).